A 262-amino-acid polypeptide reads, in one-letter code: Inactive snake venom serine proteinase 13 (262 aa).

An N-terminal signal peptide occupies residues methionine 1–alanine 18. The propeptide occupies glutamine 19–leucine 24. Residues valine 25–alanine 250 enclose the Peptidase S1 domain. Cystine bridges form between cysteine 31-cysteine 162, cysteine 49-cysteine 65, cysteine 97-cysteine 257, cysteine 141-cysteine 211, cysteine 173-cysteine 190, and cysteine 201-cysteine 226. Residues asparagine 78, asparagine 102, and asparagine 153 are each glycosylated (N-linked (GlcNAc...) asparagine).

Belongs to the peptidase S1 family. Snake venom subfamily. As to quaternary structure, monomer. As to expression, expressed by the venom gland.

The protein localises to the secreted. This is Inactive snake venom serine proteinase 13 from Crotalus adamanteus (Eastern diamondback rattlesnake).